We begin with the raw amino-acid sequence, 473 residues long: ATP synthase subunit beta, chloroplastic (473 aa).

172–179 provides a ligand contact to ATP; that stretch reads GGAGVGKT.

It belongs to the ATPase alpha/beta chains family. In terms of assembly, F-type ATPases have 2 components, CF(1) - the catalytic core - and CF(0) - the membrane proton channel. CF(1) has five subunits: alpha(3), beta(3), gamma(1), delta(1), epsilon(1). CF(0) has four main subunits: a(1), b(1), b'(1) and c(9-12).

The protein localises to the plastid. Its subcellular location is the chloroplast thylakoid membrane. The enzyme catalyses ATP + H2O + 4 H(+)(in) = ADP + phosphate + 5 H(+)(out). Functionally, produces ATP from ADP in the presence of a proton gradient across the membrane. The catalytic sites are hosted primarily by the beta subunits. The protein is ATP synthase subunit beta, chloroplastic of Equisetum arvense (Field horsetail).